The primary structure comprises 776 residues: Probable inorganic carbon transporter subunit DabA (776 aa).

Zn(2+) is bound by residues Cys313, Asp315, His473, and Cys488.

This sequence belongs to the inorganic carbon transporter (TC 9.A.2) DabA family. In terms of assembly, forms a complex with DabB. The cofactor is Zn(2+).

The protein resides in the cell inner membrane. Its function is as follows. Part of an energy-coupled inorganic carbon pump. The sequence is that of Probable inorganic carbon transporter subunit DabA from Chromobacterium violaceum (strain ATCC 12472 / DSM 30191 / JCM 1249 / CCUG 213 / NBRC 12614 / NCIMB 9131 / NCTC 9757 / MK).